Consider the following 201-residue polypeptide: Musculin (201 aa).

2 disordered regions span residues Met-1–Asn-108 and Arg-182–Ala-201. Acidic residues predominate over residues Ser-46 to Pro-56. The Nuclear localization signal motif lies at Lys-66 to Arg-71. Gly residues predominate over residues Asp-74–Gly-86. The bHLH domain occupies Ser-102–Leu-154.

In terms of assembly, efficient DNA binding requires dimerization with another bHLH protein. Binds DNA as a homodimer or a heterodimer. Forms a heterodimer with TCF3.

It localises to the nucleus. In terms of biological role, transcription repressor that blocks myogenesis and activation of E-box dependent muscle genes. The chain is Musculin (Msc) from Mus musculus (Mouse).